The chain runs to 379 residues: Sialidase-2 (379 aa).

An FRIP motif motif is present at residues 20 to 23; sequence YRIP. Arginine 21 and arginine 41 together coordinate substrate. The Proton acceptor role is filled by aspartate 46. The BNR 1 repeat unit spans residues 127–138; it reads ITSTDHGKTWSA. Residues tyrosine 179 and tyrosine 181 each coordinate substrate. A BNR 2 repeat occupies 197–208; that stretch reads FLSHDHGSTWEL. 3 residues coordinate substrate: glutamate 218, arginine 237, and arginine 303. Tyrosine 333 (nucleophile) is an active-site residue. Glutamate 354 is an active-site residue.

The protein belongs to the glycosyl hydrolase 33 family.

The protein resides in the cytoplasm. It catalyses the reaction Hydrolysis of alpha-(2-&gt;3)-, alpha-(2-&gt;6)-, alpha-(2-&gt;8)- glycosidic linkages of terminal sialic acid residues in oligosaccharides, glycoproteins, glycolipids, colominic acid and synthetic substrates.. Its function is as follows. Catalyzes the removal of sialic acid (N-acetylneuraminic acid) moieties from glycoproteins, oligosaccharides and gangliosides. The protein is Sialidase-2 (NEU2) of Cricetulus griseus (Chinese hamster).